A 152-amino-acid polypeptide reads, in one-letter code: Ubiquitin-conjugating enzyme E2 N (152 aa).

Positions 3 to 149 constitute a UBC core domain; sequence GLPRRIIKET…ARAWTRLYAM (147 aa). An N6-acetyllysine modification is found at Lys-82. The active-site Glycyl thioester intermediate is the Cys-87. A Glycyl lysine isopeptide (Lys-Gly) (interchain with G-Cter in ISG15) cross-link involves residue Lys-92.

The protein belongs to the ubiquitin-conjugating enzyme family. Heterodimer with UBE2V2. Interacts (UBE2V2-UBE2N heterodimer) with the E3 ligase STUB1 (via the U-box domain); the complex has a specific 'Lys-63'-linked polyubiquitination activity. Interacts with RNF8 and RNF168. Interacts with RNF11. Interacts with the E3 ligases, HLTF and SHPRH; the interactions promote the 'Lys-63'-linked polyubiquitination of PCNA upon genotoxic stress and lead to DNA repair. Interacts with ARIH2 (via RING-type 2). Interacts with OTUB1; leading to inhibit E2-conjugating activity. Interacts with GPS2; leading to inhibit E2-conjugating activity. Interacts with RIGI and RNF135; involved in RIGI ubiquitination and activation. In terms of processing, conjugation to ISG15 impairs formation of the thioester bond with ubiquitin but not interaction with UBE2V2.

The catalysed reaction is S-ubiquitinyl-[E1 ubiquitin-activating enzyme]-L-cysteine + [E2 ubiquitin-conjugating enzyme]-L-cysteine = [E1 ubiquitin-activating enzyme]-L-cysteine + S-ubiquitinyl-[E2 ubiquitin-conjugating enzyme]-L-cysteine.. The protein operates within protein modification; protein ubiquitination. Activity is inhibited by binding to OTUB1, which prevents 'Lys-63'-linked polyubiquitination. Activity is inhibited by GPS2, leading to prevent 'Lys-63'-linked polyubiquitination. In terms of biological role, the UBE2V1-UBE2N and UBE2V2-UBE2N heterodimers catalyze the synthesis of non-canonical 'Lys-63'-linked polyubiquitin chains. This type of polyubiquitination does not lead to protein degradation by the proteasome. Mediates transcriptional activation of target genes. Plays a role in the control of progress through the cell cycle and differentiation. Plays a role in the error-free DNA repair pathway and contributes to the survival of cells after DNA damage. Acts together with the E3 ligases, HLTF and SHPRH, in the 'Lys-63'-linked poly-ubiquitination of PCNA upon genotoxic stress, which is required for DNA repair. Appears to act together with E3 ligase RNF5 in the 'Lys-63'-linked polyubiquitination of JKAMP thereby regulating JKAMP function by decreasing its association with components of the proteasome and ERAD. Promotes TRIM5 capsid-specific restriction activity and the UBE2V1-UBE2N heterodimer acts in concert with TRIM5 to generate 'Lys-63'-linked polyubiquitin chains which activate the MAP3K7/TAK1 complex which in turn results in the induction and expression of NF-kappa-B and MAPK-responsive inflammatory genes. Together with RNF135 and UB2V1, catalyzes the viral RNA-dependent 'Lys-63'-linked polyubiquitination of RIGI to activate the downstream signaling pathway that leads to interferon beta production. UBE2V1-UBE2N together with TRAF3IP2 E3 ubiquitin ligase mediate 'Lys-63'-linked polyubiquitination of TRAF6, a component of IL17A-mediated signaling pathway. In Bos taurus (Bovine), this protein is Ubiquitin-conjugating enzyme E2 N (UBE2N).